The chain runs to 208 residues: FMN-dependent NADH:quinone oxidoreductase 2 (208 aa).

Residue Ser-17–Ser-19 participates in FMN binding.

This sequence belongs to the azoreductase type 1 family. As to quaternary structure, homodimer. Requires FMN as cofactor.

It carries out the reaction 2 a quinone + NADH + H(+) = 2 a 1,4-benzosemiquinone + NAD(+). The catalysed reaction is N,N-dimethyl-1,4-phenylenediamine + anthranilate + 2 NAD(+) = 2-(4-dimethylaminophenyl)diazenylbenzoate + 2 NADH + 2 H(+). In terms of biological role, quinone reductase that provides resistance to thiol-specific stress caused by electrophilic quinones. Its function is as follows. Also exhibits azoreductase activity. Catalyzes the reductive cleavage of the azo bond in aromatic azo compounds to the corresponding amines. This is FMN-dependent NADH:quinone oxidoreductase 2 from Halalkalibacterium halodurans (strain ATCC BAA-125 / DSM 18197 / FERM 7344 / JCM 9153 / C-125) (Bacillus halodurans).